The following is a 393-amino-acid chain: CCCH-type zinc finger protein oma-2 (393 aa).

The interval 1 to 26 (MDMLKENVIQNNEARTESSVEPSHPD) is disordered. A compositionally biased stretch (basic and acidic residues) spans 14–26 (ARTESSVEPSHPD). 2 C3H1-type zinc fingers span residues 105–133 (SYKT…HGEE) and 147–175 (KYRT…HPDN). Disordered stretches follow at residues 227–251 (TPDE…RYEL) and 311–340 (KQST…LTAA). Residues 313–340 (STPGGVSGYSSSGSTPSQDSDSSPLTAA) are compositionally biased toward low complexity. Position 327 is a phosphothreonine; by GSK3 (T327).

As to expression, exclusively expressed in the hermaphrodite gonad. Expression only in cellulized oocytes. Widely distributed throughout gonadal oocytes from the mitotic stage to the developing diakinesis stage.

The protein localises to the cytoplasm. The protein resides in the cytoplasmic granule. It is found in the cytoskeleton. Its subcellular location is the microtubule organizing center. It localises to the centrosome. In terms of biological role, zinc-finger RNA-binding protein that binds to 5'-UA[AU]-3' motifs in the 3'-UTR of maternal mRNAs to suppress translation in oocytes and embryos. Acts redundantly with oma-1 to control the temporal expression and distribution of maternal proteins and thereby promote meiotic progression, oocyte maturation, fertilization and embryonic development. Also, together with oma-1, is involved in P-granule distribution during embryonic development. This is CCCH-type zinc finger protein oma-2 from Caenorhabditis elegans.